A 279-amino-acid polypeptide reads, in one-letter code: Energy-coupling factor transporter ATP-binding protein EcfA1 (279 aa).

One can recognise an ABC transporter domain in the interval 6–240; the sequence is VEFRNVSFRY…KDALREIGLD (235 aa). 40 to 47 is an ATP binding site; sequence GHNGSGKS.

Belongs to the ABC transporter superfamily. Energy-coupling factor EcfA family. In terms of assembly, forms a stable energy-coupling factor (ECF) transporter complex composed of 2 membrane-embedded substrate-binding proteins (S component), 2 ATP-binding proteins (A component) and 2 transmembrane proteins (T component).

The protein resides in the cell membrane. Functionally, ATP-binding (A) component of a common energy-coupling factor (ECF) ABC-transporter complex. Unlike classic ABC transporters this ECF transporter provides the energy necessary to transport a number of different substrates. The protein is Energy-coupling factor transporter ATP-binding protein EcfA1 of Oceanobacillus iheyensis (strain DSM 14371 / CIP 107618 / JCM 11309 / KCTC 3954 / HTE831).